The sequence spans 626 residues: Chaperone protein DnaK (626 aa).

Thr175 carries the post-translational modification Phosphothreonine; by autocatalysis. Residues 586–606 (GAEGAAAGADGAGASAGSASG) are compositionally biased toward low complexity. A disordered region spans residues 586 to 626 (GAEGAAAGADGAGASAGSASGSDDDTVEAEVVDDDDDKDNK). Residues 607–626 (SDDDTVEAEVVDDDDDKDNK) are compositionally biased toward acidic residues.

Belongs to the heat shock protein 70 family.

Functionally, acts as a chaperone. The protein is Chaperone protein DnaK of Bifidobacterium longum (strain DJO10A).